A 375-amino-acid chain; its full sequence is Tyrosine--tRNA ligase (375 aa).

The L-tyrosine site is built by tyrosine 37, tyrosine 168, glutamine 172, aspartate 175, and glutamine 190. A 'KMSKS' region motif is present at residues 251–255 (KMSKS). Lysine 254 provides a ligand contact to ATP.

It belongs to the class-I aminoacyl-tRNA synthetase family. TyrS type 4 subfamily. Homodimer.

The protein localises to the cytoplasm. The enzyme catalyses tRNA(Tyr) + L-tyrosine + ATP = L-tyrosyl-tRNA(Tyr) + AMP + diphosphate + H(+). Functionally, catalyzes the attachment of tyrosine to tRNA(Tyr) in a two-step reaction: tyrosine is first activated by ATP to form Tyr-AMP and then transferred to the acceptor end of tRNA(Tyr). This Thermococcus gammatolerans (strain DSM 15229 / JCM 11827 / EJ3) protein is Tyrosine--tRNA ligase.